A 194-amino-acid polypeptide reads, in one-letter code: Chorion class B protein ERB4 (194 aa).

The first 20 residues, 1-20 (MSSNVIVLCVSALFIQCAVS), serve as a signal peptide directing secretion. Residues 22–72 (CVGRIGSLRGGPFDGWGYDGLGYDGFGIGGWNGRGCGGLGDDIAAAAALGA) are left arm. Residues 73 to 128 (SHGGTLAVVSTSAAPTGLGIASENVYEGSVGVCGNLPFLGTADVAGEFPTAGLGGI) form a central domain region. Residues 129–194 (DYTCGDGAVG…RGCGCGANYY (66 aa)) form a right arm (Gly-rich tandem repeats) region.

The protein belongs to the chorion protein family.

This protein is one of many from the eggshell of the silk moth. This is Chorion class B protein ERB4 from Bombyx mori (Silk moth).